The following is a 489-amino-acid chain: Diacylglycerol O-acyltransferase 1 (489 aa).

The tract at residues 1-54 is disordered; the sequence is MGDRGGAGGSRRRRTGSRPSIQGGSGPAAAEEEVRDVGAGGDAPVRDTDKDGDV. Topologically, residues 1–80 are cytoplasmic; it reads MGDRGGAGGS…SLFSSDSGFS (80 aa). An involved in homomerization region spans residues 1–88; that stretch reads MGDRGGAGGS…FSNYRGILNW (88 aa). A Phosphoserine modification is found at S20. Positions 44–53 are enriched in basic and acidic residues; it reads PVRDTDKDGD. The helical transmembrane segment at 81–115 threads the bilayer; sequence NYRGILNWCVVMLILSNARLFLENLIKYGILVDPI. The Lumenal portion of the chain corresponds to 116-127; sequence QVVSLFLKDPYS. Positions 116–127 are extracellular loop 1 (EL1); the sequence is QVVSLFLKDPYS. Residues 128 to 153 traverse the membrane as a helical segment; it reads WPALCLVIVANIFAVAAFQVEKRLAV. The MBOAT fold stretch occupies residues 128-489; sequence WPALCLVIVA…LNREAPAAGT (362 aa). The Cytoplasmic portion of the chain corresponds to 154–158; it reads GALTE. Residues 159–181 form a helical membrane-spanning segment; that stretch reads QAGLLLHGVNLATILCFPAAVAF. The Lumenal segment spans residues 182–188; that stretch reads LLESITP. A helical membrane pass occupies residues 189–220; that stretch reads VGSVLALMVYTILFLKLFSYRDVNLWCRERRA. The Cytoplasmic segment spans residues 221-274; that stretch reads GAKAKAALAGKKANGGAAQRTVSYPDNLTYRDLYYFLFAPTLCYELNFPRSPRI. The interval 225–277 is intracellular loop 1 (IL1); that stretch reads KAALAGKKANGGAAQRTVSYPDNLTYRDLYYFLFAPTLCYELNFPRSPRIRKR. The helical transmembrane segment at 275–309 threads the bilayer; the sequence is RKRFLLRRLLEMLFLTQLQVGLIQQWMVPAIQNSM. Residues 310 to 316 are Lumenal-facing; sequence KPFKDMD. The chain crosses the membrane as a helical span at residues 317-354; sequence YSRIVERLLKLAVPNHLIWLIFFYWLFHSCLNAVAELM. At 355–400 the chain is on the cytoplasmic side; the sequence is QFGDREFYRDWWNSESITYFWQNWNIPVHKWCIRHFYKPMLRRGSS. The segment at 355–400 is intracellular loop 2 (IL2); it reads QFGDREFYRDWWNSESITYFWQNWNIPVHKWCIRHFYKPMLRRGSS. Positions 361–367 match the FYXDWWN motif motif; it reads FYRDWWN. An acyl-CoA is bound by residues 375–383, Y391, and R405; that span reads WQNWNIPVH. Positions 381-395 are amphipathic helix (AH); that stretch reads PVHKWCIRHFYKPML. Residues 401-421 traverse the membrane as a helical segment; it reads KWAARTAVFLASAFFHEYLVS. H416 is a catalytic residue. Over 422 to 429 the chain is Lumenal; the sequence is IPLRMFRL. A helical membrane pass occupies residues 430–448; it reads WAFTGMMAQIPLAWIVGRF. Residues 449-450 are Cytoplasmic-facing; that stretch reads FR. Residues 451-482 form a helical membrane-spanning segment; the sequence is GNYGNAAVWLSLIIGQPVAVLMYVHDYYVLNR. Y478 contacts an acyl-CoA. Residues 483–489 lie on the Lumenal side of the membrane; it reads EAPAAGT.

The protein belongs to the membrane-bound acyltransferase family. Sterol o-acyltransferase subfamily. In terms of assembly, homodimer or homotetramer; both forms have similar enzymatic activities.

It localises to the endoplasmic reticulum membrane. The enzyme catalyses an acyl-CoA + a 1,2-diacyl-sn-glycerol = a triacyl-sn-glycerol + CoA. It catalyses the reaction all-trans-retinol + an acyl-CoA = an all-trans-retinyl ester + CoA. It carries out the reaction 2-(9Z-octadecenoyl)-glycerol + (9Z)-octadecenoyl-CoA = 1,2-di-(9Z-octadecenoyl)-sn-glycerol + CoA. The catalysed reaction is 1,2-di-(9Z-octadecenoyl)-sn-glycerol + (9Z)-octadecenoyl-CoA = 1,2,3-tri-(9Z-octadecenoyl)-glycerol + CoA. The enzyme catalyses all-trans-retinol + hexadecanoyl-CoA = all-trans-retinyl hexadecanoate + CoA. It catalyses the reaction 1-O-(9Z-octadecenyl)-glycerol + (9Z)-octadecenoyl-CoA = 1-O-(9Z-octadecyl)-3-(9Z-octadecenoyl)-glycerol + CoA. It carries out the reaction 1-O-(9Z-octadecyl)-3-(9Z-octadecenoyl)-glycerol + (9Z)-octadecenoyl-CoA = 1-O-(9Z-octadecenyl)-2,3-di-(9Z-octadecenoyl)glycerol + CoA. The catalysed reaction is 1-(9Z-octadecenoyl)-glycerol + (9Z)-octadecenoyl-CoA = 1,2-di-(9Z-octadecenoyl)-glycerol + CoA. The enzyme catalyses 1,2-di-(9Z-octadecenoyl)-glycerol + (9Z)-octadecenoate + H(+) = 1,2,3-tri-(9Z-octadecenoyl)-glycerol + H2O. It catalyses the reaction 1-octadecanoyl-2-(5Z,8Z,11Z,14Z-eicosatetraenoyl)-sn-glycerol + (9Z)-octadecenoyl-CoA = 1-octadecanoyl-2-(5Z,8Z,11Z,14Z)-eicosatetraenoyl-3-(9Z)-octadecenoyl-sn-glycerol + CoA. It carries out the reaction hexadecane-1,2-diol + 2 hexadecanoyl-CoA = 1,2-O,O-dihexadecanoyl-1,2-hexadecanediol + 2 CoA. The catalysed reaction is hexadecane-1,2-diol + hexadecanoyl-CoA = 2-hydroxyhexadecyl hexadecanoate + CoA. The enzyme catalyses 2-(9Z-octadecenoyl)-glycerol + hexadecanoyl-CoA = 1-hexadecanoyl-2-(9Z-octadecenoyl)-sn-glycerol + CoA. It catalyses the reaction 1,2-di-(9Z-octadecenoyl)-sn-glycerol + hexadecanoyl-CoA = 1,2-di-(9Z)-octadecenoyl-3-hexadecanoyl-sn-glycerol + CoA. It carries out the reaction hexadecan-1-ol + hexadecanoyl-CoA = hexadecanyl hexadecanoate + CoA. The catalysed reaction is 13-cis-retinol + hexadecanoyl-CoA = 13-cis-retinyl hexadecanoate + CoA. The enzyme catalyses 1,3-di-(9Z-octadecenoyl)-glycerol + (9Z)-octadecenoyl-CoA = 1,2,3-tri-(9Z-octadecenoyl)-glycerol + CoA. It catalyses the reaction 2,3-di-(9Z)-octadecenoyl-sn-glycerol + (9Z)-octadecenoyl-CoA = 1,2,3-tri-(9Z-octadecenoyl)-glycerol + CoA. It participates in lipid metabolism; glycerolipid metabolism. Catalyzes the terminal and only committed step in triacylglycerol synthesis by using diacylglycerol and fatty acyl CoA as substrates. Highly expressed in epithelial cells of the small intestine and its activity is essential for the absorption of dietary fats. In liver, plays a role in esterifying exogenous fatty acids to glycerol, and is required to synthesize fat for storage. Also present in female mammary glands, where it produces fat in the milk. May be involved in VLDL (very low density lipoprotein) assembly. In contrast to DGAT2 it is not essential for survival. Functions as the major acyl-CoA retinol acyltransferase (ARAT) in the skin, where it acts to maintain retinoid homeostasis and prevent retinoid toxicity leading to skin and hair disorders. Exhibits additional acyltransferase activities, includin acyl CoA:monoacylglycerol acyltransferase (MGAT), wax monoester and wax diester synthases. Also able to use 1-monoalkylglycerol (1-MAkG) as an acyl acceptor for the synthesis of monoalkyl-monoacylglycerol (MAMAG). In Bos taurus (Bovine), this protein is Diacylglycerol O-acyltransferase 1 (DGAT1).